The sequence spans 308 residues: 3'(2'),5'-bisphosphate nucleotidase 1 (308 aa).

At A2 the chain carries N-acetylalanine. The Proton acceptor role is filled by D51. Positions 74, 117, 119, and 120 each coordinate Mg(2+). T122 acts as the Proton acceptor in catalysis. Phosphothreonine is present on T122. AMP is bound by residues T195, H198, G220, and K224. S240 is modified (phosphoserine). Position 244 is an N6-succinyllysine (K244). D247 contributes to the Mg(2+) binding site.

Belongs to the inositol monophosphatase superfamily. Mg(2+) serves as cofactor. As to expression, highly expressed in heart, brain, spleen, lung, liver, skeletal muscle, kidney and testis.

The catalysed reaction is adenosine 3',5'-bisphosphate + H2O = AMP + phosphate. It carries out the reaction adenosine 2',5'-bisphosphate + H2O = AMP + phosphate. The enzyme catalyses 3'-phosphoadenylyl sulfate + H2O = adenosine 5'-phosphosulfate + phosphate. It catalyses the reaction 1D-myo-inositol 1,4-bisphosphate + H2O = 1D-myo-inositol 4-phosphate + phosphate. The catalysed reaction is 1D-myo-inositol 1,3,4-trisphosphate + H2O = 1D-myo-inositol 3,4-bisphosphate + phosphate. With respect to regulation, inhibited by Li(+) and Ca(2+), but not by Na(+). Its function is as follows. Phosphatase that converts 3'(2')-phosphoadenosine 5'-phosphate (PAP) to AMP and adenosine 3'-phosphate 5'-phosphosulfate (PAPS) to adenosine 5'-phosphosulfate (APS). Is also able to hydrolyze inositol 1,4-bisphosphate (Ins(1,4)P2) and inositol 1,3,4-trisphosphate (Ins(1,3,4)P3), but is not active on AMP, 3'-AMP, fructose-1,6-bisphosphate, Ins(1)P, Ins(2)P and Ins(1,4,5)P3. Probably prevents the toxic accumulation of PAP, a compound which inhibits a variety of proteins, including PAPS-utilizing enzymes such as sulfotransferases, and RNA processing enzymes. Could also play a role in inositol recycling and phosphoinositide metabolism. The polypeptide is 3'(2'),5'-bisphosphate nucleotidase 1 (Bpnt1) (Rattus norvegicus (Rat)).